The following is a 222-amino-acid chain: Octanoyltransferase (222 aa).

The region spanning 35 to 214 is the BPL/LPL catalytic domain; that stretch reads GTAPELIWLL…HLDGFLARLD (180 aa). Residues 73-80, 145-147, and 158-160 contribute to the substrate site; these read RGGRYTYH, AIG, and GFS. C176 acts as the Acyl-thioester intermediate in catalysis.

Belongs to the LipB family.

It is found in the cytoplasm. The catalysed reaction is octanoyl-[ACP] + L-lysyl-[protein] = N(6)-octanoyl-L-lysyl-[protein] + holo-[ACP] + H(+). It functions in the pathway protein modification; protein lipoylation via endogenous pathway; protein N(6)-(lipoyl)lysine from octanoyl-[acyl-carrier-protein]: step 1/2. Functionally, catalyzes the transfer of endogenously produced octanoic acid from octanoyl-acyl-carrier-protein onto the lipoyl domains of lipoate-dependent enzymes. Lipoyl-ACP can also act as a substrate although octanoyl-ACP is likely to be the physiological substrate. The chain is Octanoyltransferase from Novosphingobium aromaticivorans (strain ATCC 700278 / DSM 12444 / CCUG 56034 / CIP 105152 / NBRC 16084 / F199).